A 127-amino-acid polypeptide reads, in one-letter code: Small ribosomal subunit protein uS11 (127 aa).

Belongs to the universal ribosomal protein uS11 family. Part of the 30S ribosomal subunit. Interacts with proteins S7 and S18. Binds to IF-3.

In terms of biological role, located on the platform of the 30S subunit, it bridges several disparate RNA helices of the 16S rRNA. Forms part of the Shine-Dalgarno cleft in the 70S ribosome. This chain is Small ribosomal subunit protein uS11, found in Chlorobium phaeobacteroides (strain DSM 266 / SMG 266 / 2430).